The primary structure comprises 400 residues: MSESVRTNTSIWSKGMLSVIVAQFLSAFGDNALLFATLALLKAQFYPDWSQPVLQMVFVGAYILFAPFVGQIADSFAKGRVMMVANGLKLAGAAGICLGVNPFVGYTLVGIGAAAYSPAKYGILGELTTGDKLVKANGLMEASTIAAILLGSVAGGVLADWHVIAALVACALAYAGAVAANLFIPKLVAARPGQSWRLSAMTRSCFSACVVLWSNGETRFSLVGTGLFWGAGVTLRFLLVLWVPVALGITDNATPTYLNAMVAVGIVVGAGAAAKLVTLETVSRCMPAGILIGVVVAIFSLQHALLPAYALLLLIGMLGGFFVVPLNALLQERGKKSVGAGNAIAVQNLGENSAMLLMLGLYSLAVLVGVPAVAIGIGFGVLFALAIAALWIWQRRQASY.

A run of 11 helical transmembrane segments spans residues 19 to 39, 53 to 73, 91 to 111, 139 to 159, 164 to 184, 227 to 247, 257 to 277, 281 to 301, 304 to 324, 352 to 372, and 373 to 393; these read VIVAQFLSAFGDNALLFATLA, VLQMVFVGAYILFAPFVGQIA, AGAAGICLGVNPFVGYTLVGI, LMEASTIAAILLGSVAGGVLA, IAALVACALAYAGAVAANLFI, LFWGAGVTLRFLLVLWVPVAL, YLNAMVAVGIVVGAGAAAKLV, TVSRCMPAGILIGVVVAIFSL, ALLPAYALLLLIGMLGGFFVV, NSAMLLMLGLYSLAVLVGVPA, and VAIGIGFGVLFALAIAALWIW.

It belongs to the major facilitator superfamily. LplT (TC 2.A.1.42) family.

The protein resides in the cell inner membrane. Functionally, catalyzes the facilitated diffusion of 2-acyl-glycero-3-phosphoethanolamine (2-acyl-GPE) into the cell. In Salmonella gallinarum (strain 287/91 / NCTC 13346), this protein is Lysophospholipid transporter LplT.